The following is a 189-amino-acid chain: Peptidyl-tRNA hydrolase (189 aa).

Tyrosine 15 provides a ligand contact to tRNA. Histidine 20 functions as the Proton acceptor in the catalytic mechanism. The tRNA site is built by phenylalanine 66, asparagine 68, and asparagine 114.

This sequence belongs to the PTH family. In terms of assembly, monomer.

It localises to the cytoplasm. The catalysed reaction is an N-acyl-L-alpha-aminoacyl-tRNA + H2O = an N-acyl-L-amino acid + a tRNA + H(+). Its function is as follows. Hydrolyzes ribosome-free peptidyl-tRNAs (with 1 or more amino acids incorporated), which drop off the ribosome during protein synthesis, or as a result of ribosome stalling. Catalyzes the release of premature peptidyl moieties from peptidyl-tRNA molecules trapped in stalled 50S ribosomal subunits, and thus maintains levels of free tRNAs and 50S ribosomes. This chain is Peptidyl-tRNA hydrolase, found in Streptococcus pneumoniae (strain CGSP14).